We begin with the raw amino-acid sequence, 441 residues long: Ribosomal protein uS12 methylthiotransferase RimO (441 aa).

Positions 8–118 constitute an MTTase N-terminal domain; it reads PKIGFVSLGC…VLQHVHHYVP (111 aa). Residues Cys17, Cys53, Cys82, Cys150, Cys154, and Cys157 each coordinate [4Fe-4S] cluster. The Radical SAM core domain maps to 136–373; that stretch reads LTPRHYAYLK…MQLQQQISAE (238 aa). One can recognise a TRAM domain in the interval 376–441; sequence QEKVGREILV…DEYDLWGSRV (66 aa).

This sequence belongs to the methylthiotransferase family. RimO subfamily. [4Fe-4S] cluster serves as cofactor.

It is found in the cytoplasm. It carries out the reaction L-aspartate(89)-[ribosomal protein uS12]-hydrogen + (sulfur carrier)-SH + AH2 + 2 S-adenosyl-L-methionine = 3-methylsulfanyl-L-aspartate(89)-[ribosomal protein uS12]-hydrogen + (sulfur carrier)-H + 5'-deoxyadenosine + L-methionine + A + S-adenosyl-L-homocysteine + 2 H(+). Functionally, catalyzes the methylthiolation of an aspartic acid residue of ribosomal protein uS12. The protein is Ribosomal protein uS12 methylthiotransferase RimO of Salmonella arizonae (strain ATCC BAA-731 / CDC346-86 / RSK2980).